Here is a 244-residue protein sequence, read N- to C-terminus: Putative B3 domain-containing protein At2g31460 (244 aa).

A DNA-binding region (TF-B3) is located at residues Ser49–Gly147. 2 disordered regions span residues Asp175–Val196 and Asp217–Gln244. The segment covering Gly235–Gln244 has biased composition (basic and acidic residues).

It localises to the nucleus. This chain is Putative B3 domain-containing protein At2g31460, found in Arabidopsis thaliana (Mouse-ear cress).